The sequence spans 665 residues: Dystrophia myotonica WD repeat-containing protein (665 aa).

Residues 1–11 (MAAGGAEGGPG) show a composition bias toward gly residues. Disordered stretches follow at residues 1–91 (MAAG…PALP) and 100–119 (LGDP…LGAG). N-acetylalanine is present on A2. A compositionally biased stretch (pro residues) spans 52–64 (PAPPQPTQPPPGP). Over residues 65–76 (AAASGPGAAGPA) the composition is skewed to low complexity. The span at 77 to 89 (SSPPPAGPGPGPA) shows a compositional bias: pro residues. 4 WD repeats span residues 208–248 (IDKT…TSTP), 279–318 (VGEG…LRGL), 321–360 (SYFG…VVAR), and 363–445 (GHKS…LSPH). Disordered regions lie at residues 380–413 (AEEA…VSPL), 446–506 (PSLA…SMEP), 524–564 (RDRG…RSRL), and 628–665 (DEET…GTVV). Residues 450-491 (RTRTLPGTPGATPPASGSSRAGETGAGPLPRSLSRSNSLPHP) show a composition bias toward low complexity. The residue at position 487 (S487) is a Phosphoserine. R543 bears the Omega-N-methylarginine mark. One copy of the WD 5 repeat lies at 592–629 (IAQERLTVLLFLEDCIITACQEGLICTWARPGKAFTDE). Residues 634-646 (QAGQASWPRSPSK) show a composition bias toward polar residues. Over residues 653–665 (SSQPGSSPSGTVV) the composition is skewed to low complexity.

Component of the USP12/DMWD/WDR48 deubiquitinating complex. Interacts with USP12; promotes its enzymatic activity. Interacts with USP46. Widely expressed in brain where it localizes to the olfactory bulb, forebrain, thalamus, hippocampus, cerebellum, cortex and hypothalamus (at protein level). Expression seems to be particularly strong in areas of high synaptic density such as the glomerular layer of the olfactory bulb, and mossy fiber terminal fields of the hippocampus (at protein level). Expressed in retina, with strongest expression in the external and internal plexiform layers (at protein level). Strongly expressed in brain and testis. Also detected at lower levels in heart, kidney, liver, lung, ovary, uterus, bladder and skeletal muscle. In testis, expression seems to be restricted to secondary spermatocytes.

It localises to the cytoplasm. The protein resides in the nucleus. The protein localises to the perikaryon. Its subcellular location is the cell projection. It is found in the dendrite. Its function is as follows. Regulator of the deubiquitinating USP12/DMWD/WDR48 complex. Functions as a cofactor that promotes USP12 enzymatic activity. The protein is Dystrophia myotonica WD repeat-containing protein (Dmwd) of Mus musculus (Mouse).